A 312-amino-acid chain; its full sequence is Ribosomal protein L11 methyltransferase (312 aa).

Positions 160, 181, 203, and 246 each coordinate S-adenosyl-L-methionine.

Belongs to the methyltransferase superfamily. PrmA family.

Its subcellular location is the cytoplasm. It catalyses the reaction L-lysyl-[protein] + 3 S-adenosyl-L-methionine = N(6),N(6),N(6)-trimethyl-L-lysyl-[protein] + 3 S-adenosyl-L-homocysteine + 3 H(+). Functionally, methylates ribosomal protein L11. In Staphylococcus epidermidis (strain ATCC 12228 / FDA PCI 1200), this protein is Ribosomal protein L11 methyltransferase.